A 152-amino-acid chain; its full sequence is Deoxyuridine 5'-triphosphate nucleotidohydrolase (152 aa).

Residues 71–73 (RSG), N84, 88–90 (LID), and M98 contribute to the substrate site.

Belongs to the dUTPase family. Requires Mg(2+) as cofactor.

It carries out the reaction dUTP + H2O = dUMP + diphosphate + H(+). It functions in the pathway pyrimidine metabolism; dUMP biosynthesis; dUMP from dCTP (dUTP route): step 2/2. In terms of biological role, this enzyme is involved in nucleotide metabolism: it produces dUMP, the immediate precursor of thymidine nucleotides and it decreases the intracellular concentration of dUTP so that uracil cannot be incorporated into DNA. This is Deoxyuridine 5'-triphosphate nucleotidohydrolase from Erwinia tasmaniensis (strain DSM 17950 / CFBP 7177 / CIP 109463 / NCPPB 4357 / Et1/99).